We begin with the raw amino-acid sequence, 1666 residues long: Probable clathrin heavy chain (1666 aa).

WD40-like repeat stretches follow at residues Ser-24–Ser-67, Ala-68–Asp-107, Val-108–Asn-148, Gly-149–Glu-194, Ser-195–Val-255, Asn-256–Glu-299, and Ser-300–Asn-328. Thr-392 carries the post-translational modification Phosphothreonine. Ser-393 carries the phosphoserine modification. CHCR repeat units follow at residues Met-534–Val-680, Ala-683–Leu-825, Leu-830–Gln-969, Val-975–Ala-1120, Tyr-1124–Ala-1265, Leu-1270–Thr-1415, and Leu-1418–Phe-1561.

It belongs to the clathrin heavy chain family. Clathrin triskelions, composed of 3 heavy chains and 3 light chains, are the basic subunits of the clathrin coat.

It localises to the cytoplasmic vesicle membrane. Its subcellular location is the membrane. The protein resides in the coated pit. Clathrin is the major protein of the polyhedral coat of coated pits and vesicles. This Schizosaccharomyces pombe (strain 972 / ATCC 24843) (Fission yeast) protein is Probable clathrin heavy chain (chc1).